Consider the following 86-residue polypeptide: Teretoxin Tsu6.16 (86 aa).

Residues 1–21 (MATSGRLLCVCLVMGLVFESL) form the signal peptide. A propeptide spanning residues 22–46 (GYLTGREKRPAENLEASVQRRWYLN) is cleaved from the precursor.

The protein belongs to the teretoxin M (TM) superfamily. In terms of processing, contains 3 disulfide bonds. In terms of tissue distribution, expressed by the venom duct.

Its subcellular location is the secreted. The protein is Teretoxin Tsu6.16 of Terebra subulata (Chocolate spotted auger).